Reading from the N-terminus, the 1035-residue chain is Protein hir-1 (1035 aa).

WD repeat units follow at residues 15-54 (QKDF…NSHD), 68-107 (HHLG…PSHT), 129-168 (GHDN…KLKT), 171-210 (VHQS…PNAT), 232-275 (PLTT…SEIN), 299-338 (DENS…PVLI), and 342-383 (IASK…WVAK). Positions 393–479 (KYGGSRKGMG…PEEESADKTA (87 aa)) are disordered. The segment covering 408 to 425 (DGLHLENHSKEKELRGAE) has biased composition (basic and acidic residues).

This sequence belongs to the WD repeat HIR1 family.

Its subcellular location is the nucleus. Functionally, required for replication-independent chromatin assembly and for the periodic repression of histone gene transcription during the cell cycle. This chain is Protein hir-1 (hir-1), found in Neurospora crassa (strain ATCC 24698 / 74-OR23-1A / CBS 708.71 / DSM 1257 / FGSC 987).